The sequence spans 586 residues: Eukaryotic translation initiation factor 3 subunit D (586 aa).

A disordered region spans residues Phe107 to Arg154. Residues Gly108–Ala131 show a composition bias toward gly residues. The tract at residues Ser301 to Pro315 is RNA gate. Positions Phe566 to Gln577 are enriched in acidic residues. Residues Phe566–Ala586 form a disordered region.

It belongs to the eIF-3 subunit D family. Component of the eukaryotic translation initiation factor 3 (eIF-3) complex.

It is found in the cytoplasm. In terms of biological role, mRNA cap-binding component of the eukaryotic translation initiation factor 3 (eIF-3) complex, which is involved in protein synthesis of a specialized repertoire of mRNAs and, together with other initiation factors, stimulates binding of mRNA and methionyl-tRNAi to the 40S ribosome. The eIF-3 complex specifically targets and initiates translation of a subset of mRNAs involved in cell proliferation. In the eIF-3 complex, eif3d specifically recognizes and binds the 7-methylguanosine cap of a subset of mRNAs. In Emericella nidulans (strain FGSC A4 / ATCC 38163 / CBS 112.46 / NRRL 194 / M139) (Aspergillus nidulans), this protein is Eukaryotic translation initiation factor 3 subunit D.